We begin with the raw amino-acid sequence, 266 residues long: 2-C-methyl-D-erythritol 4-phosphate cytidylyltransferase (266 aa).

Residues 234–251 (ADDARSAEARSAEARSEE) show a composition bias toward basic and acidic residues. The disordered stretch occupies residues 234 to 266 (ADDARSAEARSAEARSEEPQFAGARSTDARSGG).

This sequence belongs to the IspD/TarI cytidylyltransferase family. IspD subfamily.

The enzyme catalyses 2-C-methyl-D-erythritol 4-phosphate + CTP + H(+) = 4-CDP-2-C-methyl-D-erythritol + diphosphate. The protein operates within isoprenoid biosynthesis; isopentenyl diphosphate biosynthesis via DXP pathway; isopentenyl diphosphate from 1-deoxy-D-xylulose 5-phosphate: step 2/6. Functionally, catalyzes the formation of 4-diphosphocytidyl-2-C-methyl-D-erythritol from CTP and 2-C-methyl-D-erythritol 4-phosphate (MEP). The protein is 2-C-methyl-D-erythritol 4-phosphate cytidylyltransferase of Frankia casuarinae (strain DSM 45818 / CECT 9043 / HFP020203 / CcI3).